Reading from the N-terminus, the 1592-residue chain is Autophagy-related protein 2 (1592 aa).

The segment at 2 to 21 (AFWLPQNIQKRLLLYVLQQI) is ER-targeting domain. Ser236 carries the phosphoserine modification. Ser249 bears the Phosphoserine; by ATG1 mark. The segment at 264-286 (AMEEQSNEDPSEPQVTQEEQEND) is disordered. A coiled-coil region spans residues 1049-1075 (TRKFIANTVEKLDKELSKAEASSSKSN). Ser1086 carries the post-translational modification Phosphoserine; by ATG1. Residues 1347–1373 (APVRSFMAIGSGVKTLVTVLMSEYRQE) are PAS-targeting domain.

It belongs to the ATG2 family. Interacts with ATG18. Interacts with ATG9.

The protein resides in the preautophagosomal structure membrane. It is found in the endoplasmic reticulum membrane. It carries out the reaction a 1,2-diacyl-sn-glycero-3-phosphocholine(in) = a 1,2-diacyl-sn-glycero-3-phosphocholine(out). The catalysed reaction is a 1,2-diacyl-sn-glycero-3-phospho-L-serine(in) = a 1,2-diacyl-sn-glycero-3-phospho-L-serine(out). The enzyme catalyses a 1,2-diacyl-sn-glycero-3-phosphoethanolamine(in) = a 1,2-diacyl-sn-glycero-3-phosphoethanolamine(out). Lipid transfer protein required for autophagosome completion and peroxisome degradation. Tethers the edge of the isolation membrane (IM) to the endoplasmic reticulum (ER) and mediates direct lipid transfer from ER to IM for IM expansion. ATG2 binds to the ER exit site (ERES), which is the membrane source for autophagosome formation, using basic residues in its N-terminal region (NR) and to the expanding edge of the IM through its C-terminal region. The latter binding is assisted by an ATG18-PtdIns3P interaction. ATG2 then extracts phospholipids from the membrane source using its NR and transfers them to ATG9 to the IM through its predicted beta-sheet-rich structure for membrane expansion. ATG2 is also involved in the recruitment of lipids to a restricted region close to the vacuole, termed the vacuole-isolation membrane contact site (VICS), which is also essential for autophagosome formation. Necessary for the localization of ATG18 to the preautophagosomal structure (PAS) and the binding of ATG18 to ATG9. ATG2 is the most downstream ATG protein in the preautophagosomal structure organization process. Involved in correct ATG9 trafficking through the preautophagosomal structure and in peroxisome degradation. Plays a significant role in life span extension. The polypeptide is Autophagy-related protein 2 (ATG2) (Saccharomyces cerevisiae (strain ATCC 204508 / S288c) (Baker's yeast)).